Here is a 247-residue protein sequence, read N- to C-terminus: Carboxy-S-adenosyl-L-methionine synthase (247 aa).

S-adenosyl-L-methionine contacts are provided by residues Tyr40, 65–67 (GAS), 90–91 (DN), 122–123 (DI), Asn137, and Arg204.

Belongs to the class I-like SAM-binding methyltransferase superfamily. Cx-SAM synthase family. Homodimer.

The enzyme catalyses prephenate + S-adenosyl-L-methionine = carboxy-S-adenosyl-L-methionine + 3-phenylpyruvate + H2O. Functionally, catalyzes the conversion of S-adenosyl-L-methionine (SAM) to carboxy-S-adenosyl-L-methionine (Cx-SAM). The chain is Carboxy-S-adenosyl-L-methionine synthase from Pseudomonas putida (strain W619).